We begin with the raw amino-acid sequence, 252 residues long: MFLIMLKGHILMDAPTPWGIFFQDSASPQMEGIMELHNNIMFYLAIILFTVTWMMITIIRNFVAKKSPIAHKYMNHGTLIELIWTITPAFILILIAFPSFKLLYLMDEVMDPSLVVYAEGHQWYWSYQYPDFTNEDNEFIEFDSYIVPESDLEEGQFRMLEVDNRVIIPELTHTAFVISADVIHSYACPSLGIKADAYPGRLNQASVYINGPGTFFGQCSEICGILHSSMNIAIQSVSIKDFLLWLRDQMEG.

Residues 1 to 39 (MFLIMLKGHILMDAPTPWGIFFQDSASPQMEGIMELHNN) are Mitochondrial intermembrane-facing. The helical transmembrane segment at 40 to 59 (IMFYLAIILFTVTWMMITII) threads the bilayer. Topologically, residues 60–81 (RNFVAKKSPIAHKYMNHGTLIE) are mitochondrial matrix. A helical membrane pass occupies residues 82-105 (LIWTITPAFILILIAFPSFKLLYL). Residues 106-252 (MDEVMDPSLV…LLWLRDQMEG (147 aa)) are Mitochondrial intermembrane-facing. The Cu cation site is built by H184, C219, E221, C223, H227, and M230. E221 is a binding site for Mg(2+).

The protein belongs to the cytochrome c oxidase subunit 2 family. In terms of assembly, component of the cytochrome c oxidase (complex IV, CIV), a multisubunit enzyme composed of a catalytic core of 3 subunits and several supernumerary subunits. The complex exists as a monomer or a dimer and forms supercomplexes (SCs) in the inner mitochondrial membrane with ubiquinol-cytochrome c oxidoreductase (cytochrome b-c1 complex, complex III, CIII). Cu cation serves as cofactor.

Its subcellular location is the mitochondrion inner membrane. It catalyses the reaction 4 Fe(II)-[cytochrome c] + O2 + 8 H(+)(in) = 4 Fe(III)-[cytochrome c] + 2 H2O + 4 H(+)(out). Functionally, component of the cytochrome c oxidase, the last enzyme in the mitochondrial electron transport chain which drives oxidative phosphorylation. The respiratory chain contains 3 multisubunit complexes succinate dehydrogenase (complex II, CII), ubiquinol-cytochrome c oxidoreductase (cytochrome b-c1 complex, complex III, CIII) and cytochrome c oxidase (complex IV, CIV), that cooperate to transfer electrons derived from NADH and succinate to molecular oxygen, creating an electrochemical gradient over the inner membrane that drives transmembrane transport and the ATP synthase. Cytochrome c oxidase is the component of the respiratory chain that catalyzes the reduction of oxygen to water. Electrons originating from reduced cytochrome c in the intermembrane space (IMS) are transferred via the dinuclear copper A center (CU(A)) of subunit 2 and heme A of subunit 1 to the active site in subunit 1, a binuclear center (BNC) formed by heme A3 and copper B (CU(B)). The BNC reduces molecular oxygen to 2 water molecules using 4 electrons from cytochrome c in the IMS and 4 protons from the mitochondrial matrix. The polypeptide is Cytochrome c oxidase subunit 2 (cox2) (Emericella nidulans (Aspergillus nidulans)).